A 289-amino-acid polypeptide reads, in one-letter code: Ribosomal RNA small subunit methyltransferase A (289 aa).

The S-adenosyl-L-methionine site is built by Asn-21, Leu-23, Gly-48, Glu-69, Asp-94, and Asn-120.

Belongs to the class I-like SAM-binding methyltransferase superfamily. rRNA adenine N(6)-methyltransferase family. RsmA subfamily.

The protein resides in the cytoplasm. It carries out the reaction adenosine(1518)/adenosine(1519) in 16S rRNA + 4 S-adenosyl-L-methionine = N(6)-dimethyladenosine(1518)/N(6)-dimethyladenosine(1519) in 16S rRNA + 4 S-adenosyl-L-homocysteine + 4 H(+). Specifically dimethylates two adjacent adenosines (A1518 and A1519) in the loop of a conserved hairpin near the 3'-end of 16S rRNA in the 30S particle. May play a critical role in biogenesis of 30S subunits. The polypeptide is Ribosomal RNA small subunit methyltransferase A (Actinobacillus pleuropneumoniae serotype 5b (strain L20)).